Here is a 334-residue protein sequence, read N- to C-terminus: O-methyltransferase SfmM3 (334 aa).

S-adenosyl-L-methionine contacts are provided by residues Asp-190 and 216–218; that span reads GDF. His-236 serves as the catalytic Proton acceptor.

Belongs to the class I-like SAM-binding methyltransferase superfamily. Cation-independent O-methyltransferase family. COMT subfamily.

It catalyses the reaction 5-hydroxy-3-methyl-L-tyrosine + S-adenosyl-L-methionine = 5-hydroxy-3-methyl-O-methyl-L-tyrosine + S-adenosyl-L-homocysteine + H(+). It functions in the pathway antibiotic biosynthesis. Functionally, O-methyltransferase that mediates the methylation of 3-hydroxy-5-methyl-L-tyrosine (3-OH-5-Me-Tyr) into 3-hydroxy-5-methyl-O-methyltyrosine (3-OH-5-Me-OMe-Tyr), a core structure of saframycin A, a potent antitumor antibiotic that belongs to the tetrahydroisoquinoline family. The polypeptide is O-methyltransferase SfmM3 (Streptomyces lavendulae).